The primary structure comprises 159 residues: MGKITDRVEDLAQPIVESQGLELVDVEYVKEGENRVLRVFIENPEGEVTLDHCENVSKNLDEKLDEVDPIQESYILEVSSPGIERPLKKKEDFDRFSGKLAYIKTFAPVSGNKEITGIIKGRDGDNIKVLKKDDDKELEIPFSQIAKAHLMVDFDNITG.

This sequence belongs to the RimP family.

Its subcellular location is the cytoplasm. Required for maturation of 30S ribosomal subunits. The sequence is that of Ribosome maturation factor RimP from Halothermothrix orenii (strain H 168 / OCM 544 / DSM 9562).